The following is a 646-amino-acid chain: 1-deoxy-D-xylulose-5-phosphate synthase (646 aa).

Thiamine diphosphate-binding positions include H86 and 127-129 (AHS). D158 serves as a coordination point for Mg(2+). Residues 159–160 (GA), N188, Y295, and E377 contribute to the thiamine diphosphate site. Position 188 (N188) interacts with Mg(2+).

It belongs to the transketolase family. DXPS subfamily. Homodimer. Mg(2+) serves as cofactor. Requires thiamine diphosphate as cofactor.

It catalyses the reaction D-glyceraldehyde 3-phosphate + pyruvate + H(+) = 1-deoxy-D-xylulose 5-phosphate + CO2. The protein operates within metabolic intermediate biosynthesis; 1-deoxy-D-xylulose 5-phosphate biosynthesis; 1-deoxy-D-xylulose 5-phosphate from D-glyceraldehyde 3-phosphate and pyruvate: step 1/1. In terms of biological role, catalyzes the acyloin condensation reaction between C atoms 2 and 3 of pyruvate and glyceraldehyde 3-phosphate to yield 1-deoxy-D-xylulose-5-phosphate (DXP). The sequence is that of 1-deoxy-D-xylulose-5-phosphate synthase from Burkholderia ambifaria (strain ATCC BAA-244 / DSM 16087 / CCUG 44356 / LMG 19182 / AMMD) (Burkholderia cepacia (strain AMMD)).